The primary structure comprises 410 residues: Cysteine desulfurase IscS (410 aa).

Pyridoxal 5'-phosphate is bound by residues 80 to 81, Asn160, Gln188, and 208 to 210; these read AT and SGH. Residue Lys211 is modified to N6-(pyridoxal phosphate)lysine. Thr248 is a binding site for pyridoxal 5'-phosphate. Cys334 serves as the catalytic Cysteine persulfide intermediate. Residue Cys334 participates in [2Fe-2S] cluster binding.

The protein belongs to the class-V pyridoxal-phosphate-dependent aminotransferase family. NifS/IscS subfamily. As to quaternary structure, homodimer. Forms a heterotetramer with IscU, interacts with other sulfur acceptors. The cofactor is pyridoxal 5'-phosphate.

It is found in the cytoplasm. It catalyses the reaction (sulfur carrier)-H + L-cysteine = (sulfur carrier)-SH + L-alanine. It functions in the pathway cofactor biosynthesis; iron-sulfur cluster biosynthesis. Functionally, master enzyme that delivers sulfur to a number of partners involved in Fe-S cluster assembly, tRNA modification or cofactor biosynthesis. Catalyzes the removal of elemental sulfur atoms from cysteine to produce alanine. Functions as a sulfur delivery protein for Fe-S cluster synthesis onto IscU, an Fe-S scaffold assembly protein, as well as other S acceptor proteins. The sequence is that of Cysteine desulfurase IscS from Rickettsia africae (strain ESF-5).